A 199-amino-acid polypeptide reads, in one-letter code: Recombination protein RecR (199 aa).

Residues 58–73 (CARCGNITSADLCDIC) form a C4-type zinc finger. A Toprim domain is found at 81–176 (GELCVVEDVA…QVTSLAQGVP (96 aa)).

This sequence belongs to the RecR family.

Functionally, may play a role in DNA repair. It seems to be involved in an RecBC-independent recombinational process of DNA repair. It may act with RecF and RecO. The sequence is that of Recombination protein RecR from Cereibacter sphaeroides (strain ATCC 17025 / ATH 2.4.3) (Rhodobacter sphaeroides).